The primary structure comprises 632 residues: MAU2 chromatid cohesion factor homolog (632 aa).

TPR repeat units lie at residues 453–486 and 493–526; these read GGFY…ANAE and SCSL…ASKI.

The protein belongs to the SCC4/mau-2 family. In terms of assembly, interacts with Nipped-B to form the cohesin loading complex.

The protein localises to the nucleus. It localises to the nucleoplasm. Functionally, required for association of the cohesin complex with chromatin during interphase. Plays a role in sister chromatid cohesion and normal progression through prometaphase. The sequence is that of MAU2 chromatid cohesion factor homolog from Drosophila simulans (Fruit fly).